The primary structure comprises 417 residues: Serine hydroxymethyltransferase (417 aa).

(6S)-5,6,7,8-tetrahydrofolate is bound by residues leucine 121 and glycine 125–leucine 127. Lysine 229 bears the N6-(pyridoxal phosphate)lysine mark. Residue serine 355–phenylalanine 357 coordinates (6S)-5,6,7,8-tetrahydrofolate.

The protein belongs to the SHMT family. As to quaternary structure, homodimer. The cofactor is pyridoxal 5'-phosphate.

Its subcellular location is the cytoplasm. It catalyses the reaction (6R)-5,10-methylene-5,6,7,8-tetrahydrofolate + glycine + H2O = (6S)-5,6,7,8-tetrahydrofolate + L-serine. Its pathway is one-carbon metabolism; tetrahydrofolate interconversion. It participates in amino-acid biosynthesis; glycine biosynthesis; glycine from L-serine: step 1/1. Functionally, catalyzes the reversible interconversion of serine and glycine with tetrahydrofolate (THF) serving as the one-carbon carrier. This reaction serves as the major source of one-carbon groups required for the biosynthesis of purines, thymidylate, methionine, and other important biomolecules. Also exhibits THF-independent aldolase activity toward beta-hydroxyamino acids, producing glycine and aldehydes, via a retro-aldol mechanism. This chain is Serine hydroxymethyltransferase, found in Salmonella schwarzengrund (strain CVM19633).